The primary structure comprises 904 residues: Protein translocase subunit SecA (904 aa).

ATP is bound by residues Q87, 105–109 (GEGKT), and D507. A disordered region spans residues 865–887 (GEGAEAAGQQPADAGPKIGRNDP). Positions 868 to 880 (AEAAGQQPADAGP) are enriched in low complexity. Residues C888, C890, C899, and H900 each coordinate Zn(2+).

It belongs to the SecA family. In terms of assembly, monomer and homodimer. Part of the essential Sec protein translocation apparatus which comprises SecA, SecYEG and auxiliary proteins SecDF-YajC and YidC. It depends on Zn(2+) as a cofactor.

Its subcellular location is the cell inner membrane. It localises to the cytoplasm. The enzyme catalyses ATP + H2O + cellular proteinSide 1 = ADP + phosphate + cellular proteinSide 2.. Its function is as follows. Part of the Sec protein translocase complex. Interacts with the SecYEG preprotein conducting channel. Has a central role in coupling the hydrolysis of ATP to the transfer of proteins into and across the cell membrane, serving both as a receptor for the preprotein-SecB complex and as an ATP-driven molecular motor driving the stepwise translocation of polypeptide chains across the membrane. This is Protein translocase subunit SecA from Dechloromonas aromatica (strain RCB).